The sequence spans 185 residues: Elongation factor P (185 aa).

Belongs to the elongation factor P family.

Its subcellular location is the cytoplasm. It functions in the pathway protein biosynthesis; polypeptide chain elongation. Involved in peptide bond synthesis. Stimulates efficient translation and peptide-bond synthesis on native or reconstituted 70S ribosomes in vitro. Probably functions indirectly by altering the affinity of the ribosome for aminoacyl-tRNA, thus increasing their reactivity as acceptors for peptidyl transferase. This Synechococcus sp. (strain JA-3-3Ab) (Cyanobacteria bacterium Yellowstone A-Prime) protein is Elongation factor P.